The primary structure comprises 319 residues: Guanidinobutyrase (319 aa).

The Mn(2+) site is built by H129, D152, H154, D156, D243, and D245.

It belongs to the arginase family. Agmatinase subfamily. Homohexamer. Mn(2+) serves as cofactor.

It catalyses the reaction 4-guanidinobutanoate + H2O = urea + 4-aminobutanoate. Functionally, catalyzes specifically the hydrolysis of 4-guanidinobutanoate to 4-aminobutanoate and urea. Has no activity against arginine, agmatine, 3-guanidinopropionate and guanidinoacetate. This Pseudomonas aeruginosa (strain ATCC 15692 / DSM 22644 / CIP 104116 / JCM 14847 / LMG 12228 / 1C / PRS 101 / PAO1) protein is Guanidinobutyrase (gbuA).